The sequence spans 373 residues: Response regulator aspartate phosphatase J (373 aa).

TPR repeat units follow at residues 99–135 (YYFY…VEDE) and 146–179 (AEVY…GRRR). L-glutamyl-L-arginyl-glycyl-L-methionyl-L-threonine is bound by residues Glu-147, Tyr-150, Gln-181, Asp-192, Tyr-217, Asn-225, His-228, Gln-260, Tyr-297, Lys-300, and Asp-335. TPR repeat units lie at residues 220-253 (AAAY…FEEH) and 259-292 (VQAV…AAEW). A TPR 5 repeat occupies 334 to 367 (EDLLHDTAERFNQLEHYESAAFFYRRLMNIKKKL).

The protein belongs to the Rap family. Monomer in solution. Homodimer.

The protein resides in the cytoplasm. Its activity is regulated as follows. Inhibited in vitro by the competence and sporulation stimulating factor (CSF), encoded by phrC. However, CSF has at least three targets (RapB, RapC, and RapJ) and the physiological importance of RapJ inhibition by CSF is unknown. Interaction with CSF induces a conformational change in RapJ. In terms of biological role, involved in the regulation of sporulation. Acts as a phosphatase that specifically dephosphorylates the sporulation initiation phosphotransferase Spo0F and inhibits its activity. The polypeptide is Response regulator aspartate phosphatase J (rapJ) (Bacillus subtilis (strain 168)).